A 220-amino-acid chain; its full sequence is Zinc finger protein 36 (220 aa).

The C2H2-type 1 zinc-finger motif lies at 73 to 95 (FRCTVCGKAFASYQALGGHKSSH). Residues 90-134 (GHKSSHRKPPSPGDHYGAAAAAQQLASAGDSKEDSASSAAGSTGP) form a disordered region. Positions 107–117 (AAAAAQQLASA) are enriched in low complexity. Residues 135 to 157 (HRCTICRRSFATGQALGGHKRCH) form a C2H2-type 2 zinc finger.

Probable transcription factor involved in abscisic acid (ABA) signaling. Required for the regulation of the cross-talk between NADPH oxidase, hydrogen peroxide and MAP kinase in ABA signaling. Regulates the expression of the NADPH oxidase genes RBOHB and RBOHE, and the MAPK genes MPK1, MPK4, MPK5, MPK7 and MPK14. Regulates ABA-induced hydrogen peroxide production and antioxidant defense. Required for tolerance to water stress and oxidative stress. This is Zinc finger protein 36 from Oryza sativa subsp. japonica (Rice).